We begin with the raw amino-acid sequence, 159 residues long: MAEQTEKAFLKQPKVFLASKKTGKGKRPGKGGNRFWKSIGLGFKTPREAIDGTYIDKKCPFTGTVSIRGRILAGTCHSAKMNRTIIVRRNYLHFIKKYQRYEKRHSNIPAHVSPCFRVKEGDHVIIGQCRPLSKTVRFNVLKVIPAGSSGGVKKAFTAI.

The protein belongs to the universal ribosomal protein uS17 family.

This is Small ribosomal subunit protein uS17 (RPS11) from Euphorbia esula (Leafy spurge).